A 367-amino-acid chain; its full sequence is Zorya protein ZorE (367 aa).

Component of antiviral defense system Zorya type II, composed of ZorA, ZorB and ZorE. Expression of Zorya type II in E.coli (strain MG1655) confers resistance to phages SECphi7 and T7. While most T7 infected Zorya-containing cells undergo abortive infection, a minority produce viable phage progeny. These eventually accumulate to a high multiplicity of infection, leading to culture collapse by 170 minutes after initial infection. ZorA and ZorB probably assemble in the cell inner membrane and exert their effect there. This may be a nuclease. This Escherichia coli (strain ATCC 8739 / DSM 1576 / NBRC 3972 / NCIMB 8545 / WDCM 00012 / Crooks) protein is Zorya protein ZorE.